The chain runs to 816 residues: Sucrose synthase 1 (816 aa).

Residues M280 to T757 form a GT-B glycosyltransferase region.

It belongs to the glycosyltransferase 1 family. Plant sucrose synthase subfamily. In terms of assembly, homotetramer or heterotetramer with SUS2. In terms of tissue distribution, expressed in root phloem and leaf mesophyll. Expressed in phloem tissues and aleurone layers of seeds and at lower levels in the pericarp and endosperm cells (at protein level). Predominantly expressed in elongating tissues including roots, developing leaves and internodes.

It catalyses the reaction an NDP-alpha-D-glucose + D-fructose = a ribonucleoside 5'-diphosphate + sucrose + H(+). In terms of biological role, sucrose-cleaving enzyme that provides UDP-glucose and fructose for various metabolic pathways. The polypeptide is Sucrose synthase 1 (SUS1) (Oryza sativa subsp. japonica (Rice)).